The primary structure comprises 292 residues: Alpha-soluble NSF attachment protein (292 aa).

Serine 2 carries the post-translational modification N-acetylserine. Lysine 261 participates in a covalent cross-link: Glycyl lysine isopeptide (Lys-Gly) (interchain with G-Cter in ubiquitin).

Belongs to the SNAP family. In terms of assembly, binds to vacuolar cis-SNARE complexes composed of the v-SNAREs NYV1, VTI1 and YKT6, and the t-SNAREs VAM3 and VAM7. Interacts with SEC18.

It localises to the membrane. SNARE complex protein that binds to cis-SNARE complexes on membranes and is required for vesicular transport between the endoplasmic reticulum and the Golgi apparatus and for homotypic vacuole fusion. During the priming step of membrane fusion, is released from cis-SNARE complexes by SEC18 to establish a pool of unpaired SNAREs, which are required for interactions in trans during docking and fusion steps. Can displace HOPS from SNARE complexes, which may be a prerequisite for trans-SNARE complex disassembly and subsequent rounds of priming, docking and fusion. The polypeptide is Alpha-soluble NSF attachment protein (SEC17) (Saccharomyces cerevisiae (strain ATCC 204508 / S288c) (Baker's yeast)).